We begin with the raw amino-acid sequence, 166 residues long: NAD(P)H-quinone oxidoreductase subunit I, chloroplastic (166 aa).

2 consecutive 4Fe-4S ferredoxin-type domains span residues 55 to 84 and 95 to 124; these read GRIHFEFDKCIACEVCVRVCPIDLPVVDWK and LNYSIDFGICIFCGNCVEYCPTNCLSMTEE. 8 residues coordinate [4Fe-4S] cluster: Cys-64, Cys-67, Cys-70, Cys-74, Cys-104, Cys-107, Cys-110, and Cys-114.

The protein belongs to the complex I 23 kDa subunit family. NDH is composed of at least 16 different subunits, 5 of which are encoded in the nucleus. [4Fe-4S] cluster serves as cofactor.

The protein localises to the plastid. It is found in the chloroplast thylakoid membrane. It carries out the reaction a plastoquinone + NADH + (n+1) H(+)(in) = a plastoquinol + NAD(+) + n H(+)(out). It catalyses the reaction a plastoquinone + NADPH + (n+1) H(+)(in) = a plastoquinol + NADP(+) + n H(+)(out). Functionally, NDH shuttles electrons from NAD(P)H:plastoquinone, via FMN and iron-sulfur (Fe-S) centers, to quinones in the photosynthetic chain and possibly in a chloroplast respiratory chain. The immediate electron acceptor for the enzyme in this species is believed to be plastoquinone. Couples the redox reaction to proton translocation, and thus conserves the redox energy in a proton gradient. This Oblivia mikanioides (Salmea mikanioides) protein is NAD(P)H-quinone oxidoreductase subunit I, chloroplastic.